Here is a 122-residue protein sequence, read N- to C-terminus: Large ribosomal subunit protein bL19 (122 aa).

It belongs to the bacterial ribosomal protein bL19 family.

Its function is as follows. This protein is located at the 30S-50S ribosomal subunit interface and may play a role in the structure and function of the aminoacyl-tRNA binding site. This chain is Large ribosomal subunit protein bL19, found in Novosphingobium aromaticivorans (strain ATCC 700278 / DSM 12444 / CCUG 56034 / CIP 105152 / NBRC 16084 / F199).